We begin with the raw amino-acid sequence, 260 residues long: Thiazole synthase (260 aa).

Catalysis depends on Lys96, which acts as the Schiff-base intermediate with DXP. 1-deoxy-D-xylulose 5-phosphate contacts are provided by residues Gly157, 184–185 (AG), and 206–207 (NT).

It belongs to the ThiG family. In terms of assembly, homotetramer. Forms heterodimers with either ThiH or ThiS.

It is found in the cytoplasm. It catalyses the reaction [ThiS sulfur-carrier protein]-C-terminal-Gly-aminoethanethioate + 2-iminoacetate + 1-deoxy-D-xylulose 5-phosphate = [ThiS sulfur-carrier protein]-C-terminal Gly-Gly + 2-[(2R,5Z)-2-carboxy-4-methylthiazol-5(2H)-ylidene]ethyl phosphate + 2 H2O + H(+). The protein operates within cofactor biosynthesis; thiamine diphosphate biosynthesis. In terms of biological role, catalyzes the rearrangement of 1-deoxy-D-xylulose 5-phosphate (DXP) to produce the thiazole phosphate moiety of thiamine. Sulfur is provided by the thiocarboxylate moiety of the carrier protein ThiS. In vitro, sulfur can be provided by H(2)S. The protein is Thiazole synthase of Rhodopseudomonas palustris (strain TIE-1).